The following is a 260-amino-acid chain: Tropinone reductase 2 (260 aa).

13–37 (LVTGGSRGIGYGIVEELANLGASVY) contributes to the NADP(+) binding site. Serine 146 lines the substrate pocket. The active-site Proton acceptor is the tyrosine 159.

It belongs to the short-chain dehydrogenases/reductases (SDR) family.

It carries out the reaction pseudotropine + NADP(+) = tropinone + NADPH + H(+). Its pathway is alkaloid biosynthesis; tropane alkaloid biosynthesis. Catalyzes the stereospecific reduction of tropinone to pseudotropine. This is Tropinone reductase 2 (TR2) from Hyoscyamus niger (Black henbane).